The primary structure comprises 250 residues: Ribosomal RNA small subunit methyltransferase J (250 aa).

S-adenosyl-L-methionine-binding positions include 96–97 (RD) and D168.

The protein belongs to the methyltransferase superfamily. RsmJ family.

It localises to the cytoplasm. The enzyme catalyses guanosine(1516) in 16S rRNA + S-adenosyl-L-methionine = N(2)-methylguanosine(1516) in 16S rRNA + S-adenosyl-L-homocysteine + H(+). Its function is as follows. Specifically methylates the guanosine in position 1516 of 16S rRNA. The protein is Ribosomal RNA small subunit methyltransferase J of Neisseria gonorrhoeae (strain NCCP11945).